The sequence spans 127 residues: Spore germination protein 2 (127 aa).

Residues 1–25 form the signal peptide; the sequence is MNIRNSLILIISTILFFSIINGSLS. 2 N-linked (GlcNAc...) asparagine glycosylation sites follow: Asn-54 and Asn-118.

It belongs to the Dictyostelium gerABC family.

It is found in the secreted. The chain is Spore germination protein 2 (gerB) from Dictyostelium discoideum (Social amoeba).